The primary structure comprises 152 residues: Heavy metal-associated isoprenylated plant protein 22 (152 aa).

Residues 28 to 91 (MQTVNIKVKI…TVQSTGKKKA (64 aa)) enclose the HMA domain. C39 and C42 together coordinate a metal cation. A disordered region spans residues 123–152 (SEQAQAQPGSTDDKLMSLFSDENPNACTVM). Residues 142 to 152 (SDENPNACTVM) show a composition bias toward polar residues. C149 is subject to Cysteine methyl ester. Residue C149 is the site of S-farnesyl cysteine attachment. The propeptide at 150-152 (TVM) is removed in mature form.

It belongs to the HIPP family. As to quaternary structure, interacts with ZHD11/HB29. Expressed in lateral roots and mature anthers.

The protein resides in the membrane. Heavy-metal-binding protein. Binds cadmium. May be involved in cadmium transport and play a role in cadmium detoxification. The sequence is that of Heavy metal-associated isoprenylated plant protein 22 from Arabidopsis thaliana (Mouse-ear cress).